A 465-amino-acid chain; its full sequence is Hepatocyte nuclear factor 6 (465 aa).

Disordered regions lie at residues 15–84 and 119–141; these read GVSH…GPLH and SDKFPHHHHHHHHHHHPHHHQRL. Residues 123-140 show a composition bias toward basic residues; the sequence is PHHHHHHHHHHHPHHHQR. Positions 283-369 form a DNA-binding region, CUT; the sequence is GSNSGQMEEI…QRMSALRLAA (87 aa). Positions 385–444 form a DNA-binding region, homeobox; sequence PKKPRLVFTDVQRRTLHAIFKENKRPSKELQITISQQLGLELSTVSNFFMNARRRSLDKW. Residues 442–465 are disordered; that stretch reads DKWQDEGSSNSGNSSSSSSTCTKA. Residues 448–465 are compositionally biased toward low complexity; that stretch reads GSSNSGNSSSSSSTCTKA.

This sequence belongs to the CUT homeobox family. Binds DNA as a monomer. As to expression, expressed in liver, brain, spleen and testis.

It localises to the nucleus. Functionally, transcriptional activator. Binds the consensus sequence 5'-DHWATTGAYTWWD-3' on a variety of gene promoters such as those of HNF3B and TTR. Important for liver genes transcription. The affinity of HNF-6-alpha and HNF-6-beta for DNA differs depending on the target sequence. The polypeptide is Hepatocyte nuclear factor 6 (Onecut1) (Rattus norvegicus (Rat)).